Reading from the N-terminus, the 208-residue chain is Small ribosomal subunit protein uS4 (208 aa).

The S4 RNA-binding domain occupies 96-159; the sequence is SRLDNIVYRL…KKNEKVLEAL (64 aa).

This sequence belongs to the universal ribosomal protein uS4 family. In terms of assembly, part of the 30S ribosomal subunit. Contacts protein S5. The interaction surface between S4 and S5 is involved in control of translational fidelity.

Functionally, one of the primary rRNA binding proteins, it binds directly to 16S rRNA where it nucleates assembly of the body of the 30S subunit. With S5 and S12 plays an important role in translational accuracy. The chain is Small ribosomal subunit protein uS4 from Mycoplasma capricolum subsp. capricolum (strain California kid / ATCC 27343 / NCTC 10154).